A 394-amino-acid polypeptide reads, in one-letter code: Phosphopentomutase (394 aa).

Mn(2+)-binding residues include aspartate 13, aspartate 286, histidine 291, aspartate 327, histidine 328, and histidine 339.

This sequence belongs to the phosphopentomutase family. It depends on Mn(2+) as a cofactor.

The protein resides in the cytoplasm. It carries out the reaction 2-deoxy-alpha-D-ribose 1-phosphate = 2-deoxy-D-ribose 5-phosphate. It catalyses the reaction alpha-D-ribose 1-phosphate = D-ribose 5-phosphate. It functions in the pathway carbohydrate degradation; 2-deoxy-D-ribose 1-phosphate degradation; D-glyceraldehyde 3-phosphate and acetaldehyde from 2-deoxy-alpha-D-ribose 1-phosphate: step 1/2. Its function is as follows. Isomerase that catalyzes the conversion of deoxy-ribose 1-phosphate (dRib-1-P) and ribose 1-phosphate (Rib-1-P) to deoxy-ribose 5-phosphate (dRib-5-P) and ribose 5-phosphate (Rib-5-P), respectively. The sequence is that of Phosphopentomutase from Bacillus mycoides (strain KBAB4) (Bacillus weihenstephanensis).